The primary structure comprises 407 residues: Homeobox even-skipped homolog protein 1 (407 aa).

Disordered stretches follow at residues 29–120 and 137–179; these read EAVG…SDFY and EYQH…ACSA. A compositionally biased stretch (polar residues) spans 102-114; sequence DSLSGQGQPSSSD. The homeobox DNA-binding region spans 183–242; the sequence is MRRYRTAFTREQIARLEKEFYRENYVSRPRRCELAAALNLPETTIKVWFQNRRMKDKRQR.

The protein belongs to the even-skipped homeobox family.

The protein resides in the nucleus. In terms of biological role, may play a role in the specification of neuronal cell types. The sequence is that of Homeobox even-skipped homolog protein 1 (EVX1) from Homo sapiens (Human).